The sequence spans 894 residues: Desmocollin-1 (894 aa).

The signal sequence occupies residues 1 to 29; that stretch reads MALASAAPGSIFCKQLLFSLLVLTLLCDA. A propeptide spanning residues 30 to 134 is cleaved from the precursor; it reads CQKVYLRVPS…KDTALKRSKR (105 aa). Cadherin domains are found at residues 135–242, 243–354, 355–471, 472–575, and 576–682; these read RWAP…APYF, EHRV…PPSF, TETS…GPEC, HPPV…DHAP, and QIDK…STRD. The Extracellular segment spans residues 135 to 691; it reads RWAPIPASLM…DVRPNVILGR (557 aa). A glycan (N-linked (GlcNAc...) asparagine) is linked at Asn165. Residue Thr385 is modified to Phosphothreonine. The N-linked (GlcNAc...) asparagine glycan is linked to Asn546. The helical transmembrane segment at 692 to 714 threads the bilayer; the sequence is WAILAMVLGSVLLLCILFTCFCV. Residues 715-894 lie on the Cytoplasmic side of the membrane; that stretch reads TAKRTVKKCF…RTLAKTCIKK (180 aa).

In terms of assembly, binds to JUP/plakoglobin. As to expression, strongly expressed in epidermis, less in lymph node and tongue.

The protein resides in the cell membrane. It is found in the cell junction. It localises to the desmosome. In terms of biological role, a component of desmosome cell-cell junctions which are required for positive regulation of cellular adhesion. Required for desmosome adhesion strength between the granular layers of the epidermis, as a result moderates epidermal proliferation and differentiation. Is therefore required to maintain postnatal epidermal barrier function and normal hair follicle morphology into adulthood. The polypeptide is Desmocollin-1 (DSC1) (Homo sapiens (Human)).